The primary structure comprises 189 residues: UPF0301 protein CAB604 (189 aa).

Belongs to the UPF0301 (AlgH) family.

The sequence is that of UPF0301 protein CAB604 from Chlamydia abortus (strain DSM 27085 / S26/3) (Chlamydophila abortus).